We begin with the raw amino-acid sequence, 559 residues long: Podocan-like protein 1 (559 aa).

A signal peptide spans 1–20 (MRPQELLLLLLMLKWSLAHT). A glycan (N-linked (GlcNAc...) asparagine) is linked at asparagine 64. 20 LRR repeats span residues 66–89 (TRAA…ELSR), 90–115 (LSGL…AFES), 117–139 (NQLE…LPRS), 140–160 (LRVA…TFGE), 161–186 (KPAL…TFHG), 188–208 (EVIT…PSLP), 209–231 (ASLE…ALSL), 233–257 (THLR…TFSK), 258–281 (LSSL…LPGT), 283–302 (TILH…RLHK), 303–328 (ARGL…TLRP), 329–352 (LRAL…LPRH), 354–373 (QALV…DLVS), 374–399 (ARAL…AFRR), 400–423 (LRAL…LPAS), 425–444 (RSLR…QLAG), 445–470 (LNKL…TWHE), 471–494 (LQAL…LPEA), 496–515 (EELY…AFLS), and 517–541 (PHLR…ALQG).

Belongs to the small leucine-rich proteoglycan (SLRP) family. SLRP class V subfamily. In terms of processing, N-glycosylated. As to expression, detected in bone where it is expressed in osteoblasts and newly formed bone matrix (at protein level). Also expressed weakly in osteoclasts (at protein level). Expressed strongly in calvaria, lung and femur, and weakly in kidney.

The protein resides in the secreted. The protein localises to the extracellular space. It localises to the extracellular matrix. This Mus musculus (Mouse) protein is Podocan-like protein 1.